The chain runs to 269 residues: Surfeit locus protein 4 (269 aa).

5 consecutive transmembrane segments (helical) span residues 64–84 (FLATCFVIINLIGQIGGCVLV), 92–112 (YACFGLFCIIALQTVAYSILW), 179–199 (FFSILQNMVGTALIILVAVGF), 203–223 (LAALTLVVWLLAINVYFNAFW), and 242–262 (TTSVIGGLLLVVALGPGGVSM). The short motif at 266-269 (KKEW) is the Di-lysine motif element.

It belongs to the SURF4 family.

Its subcellular location is the endoplasmic reticulum membrane. It is found in the endoplasmic reticulum-Golgi intermediate compartment membrane. It localises to the golgi apparatus membrane. Functionally, endoplasmic reticulum cargo receptor that mediates the export of lipoproteins by recruiting cargos into COPII vesicles to facilitate their secretion. This Danio rerio (Zebrafish) protein is Surfeit locus protein 4.